The sequence spans 367 residues: Aminomethyltransferase (367 aa).

Belongs to the GcvT family. As to quaternary structure, the glycine cleavage system is composed of four proteins: P, T, L and H.

It catalyses the reaction N(6)-[(R)-S(8)-aminomethyldihydrolipoyl]-L-lysyl-[protein] + (6S)-5,6,7,8-tetrahydrofolate = N(6)-[(R)-dihydrolipoyl]-L-lysyl-[protein] + (6R)-5,10-methylene-5,6,7,8-tetrahydrofolate + NH4(+). Functionally, the glycine cleavage system catalyzes the degradation of glycine. This is Aminomethyltransferase from Mycobacterium bovis (strain ATCC BAA-935 / AF2122/97).